The following is a 219-amino-acid chain: Thiamine-phosphate synthase (219 aa).

Residues 48–52 (QFRQK) and Asn84 contribute to the 4-amino-2-methyl-5-(diphosphooxymethyl)pyrimidine site. Residues Asp85 and Asp104 each coordinate Mg(2+). Ser123 contributes to the 4-amino-2-methyl-5-(diphosphooxymethyl)pyrimidine binding site. Residue 150–152 (TQS) participates in 2-[(2R,5Z)-2-carboxy-4-methylthiazol-5(2H)-ylidene]ethyl phosphate binding. Lys153 provides a ligand contact to 4-amino-2-methyl-5-(diphosphooxymethyl)pyrimidine. Residues Gly181 and 199 to 200 (IS) contribute to the 2-[(2R,5Z)-2-carboxy-4-methylthiazol-5(2H)-ylidene]ethyl phosphate site.

The protein belongs to the thiamine-phosphate synthase family. Requires Mg(2+) as cofactor.

It carries out the reaction 2-[(2R,5Z)-2-carboxy-4-methylthiazol-5(2H)-ylidene]ethyl phosphate + 4-amino-2-methyl-5-(diphosphooxymethyl)pyrimidine + 2 H(+) = thiamine phosphate + CO2 + diphosphate. It catalyses the reaction 2-(2-carboxy-4-methylthiazol-5-yl)ethyl phosphate + 4-amino-2-methyl-5-(diphosphooxymethyl)pyrimidine + 2 H(+) = thiamine phosphate + CO2 + diphosphate. The enzyme catalyses 4-methyl-5-(2-phosphooxyethyl)-thiazole + 4-amino-2-methyl-5-(diphosphooxymethyl)pyrimidine + H(+) = thiamine phosphate + diphosphate. The protein operates within cofactor biosynthesis; thiamine diphosphate biosynthesis; thiamine phosphate from 4-amino-2-methyl-5-diphosphomethylpyrimidine and 4-methyl-5-(2-phosphoethyl)-thiazole: step 1/1. Its function is as follows. Condenses 4-methyl-5-(beta-hydroxyethyl)thiazole monophosphate (THZ-P) and 2-methyl-4-amino-5-hydroxymethyl pyrimidine pyrophosphate (HMP-PP) to form thiamine monophosphate (TMP). This chain is Thiamine-phosphate synthase, found in Helicobacter pylori (strain Shi470).